A 285-amino-acid polypeptide reads, in one-letter code: Sulfotransferase 2A2 (285 aa).

3'-phosphoadenylyl sulfate is bound by residues Lys-44, Ser-45, Gly-46, Thr-47, Asn-48, and Trp-49. His-99 serves as the catalytic Proton acceptor. Residues Arg-121, Ser-129, Tyr-184, Ser-218, Arg-247, Lys-248, and Gly-249 each contribute to the 3'-phosphoadenylyl sulfate site.

It belongs to the sulfotransferase 1 family. Detected in liver.

Its subcellular location is the cytoplasm. The enzyme catalyses an alcohol + 3'-phosphoadenylyl sulfate = an alkyl sulfate + adenosine 3',5'-bisphosphate + H(+). Its function is as follows. Sulfotransferase that utilizes 3'-phospho-5'-adenylyl sulfate (PAPS) as sulfonate donor to catalyze the sulfate conjugation of a potential wide variety of acceptor molecules bearing a hydroxyl group. Sulfonation increases the water solubility of most compounds, and therefore their renal excretion, but it can also result in bioactivation to form active metabolites. This is Sulfotransferase 2A2 from Rattus norvegicus (Rat).